The following is a 222-amino-acid chain: Sigma non-opioid intracellular receptor 1 (222 aa).

The Lumenal segment spans residues 1-6 (MSLIRT). A helical membrane pass occupies residues 7–29 (ILKLVVVVGFLSLTVQFIRHWMA). Residues 30–222 (NKQYVFTKEE…STFLTESGVL (193 aa)) lie on the Cytoplasmic side of the membrane. An important for ligand-binding region spans residues 97–104 (SLTEYVLL). Residues 175 to 222 (FIPSTLGFALADTMFSTQDFLTLFYTARVYVKGMILEASTFLTESGVL) are C-terminal hydrophobic region.

This sequence belongs to the ERG2 family. Homotrimer.

The protein resides in the nucleus inner membrane. Its subcellular location is the nucleus outer membrane. It is found in the nucleus envelope. The protein localises to the cytoplasmic vesicle. It localises to the endoplasmic reticulum membrane. The protein resides in the membrane. May function in lipid transport from the endoplasmic reticulum and be involved in a wide array of cellular functions probably through regulation of the biogenesis of lipid microdomains at the plasma membrane. May regulate calcium efflux at the endoplasmic reticulum. In Danio rerio (Zebrafish), this protein is Sigma non-opioid intracellular receptor 1 (sigmar1).